The sequence spans 119 residues: Basic phospholipase A2 (119 aa).

Disulfide bonds link Cys-11/Cys-71, Cys-27/Cys-118, Cys-29/Cys-45, Cys-44/Cys-99, Cys-51/Cys-92, Cys-60/Cys-85, and Cys-78/Cys-90. Ca(2+) contacts are provided by Tyr-28, Gly-30, and Gly-32. His-48 is a catalytic residue. Asp-49 contacts Ca(2+). Residue Asp-93 is part of the active site.

This sequence belongs to the phospholipase A2 family. Group I subfamily. D49 sub-subfamily. Requires Ca(2+) as cofactor. As to expression, expressed by the venom gland.

The protein localises to the secreted. It catalyses the reaction a 1,2-diacyl-sn-glycero-3-phosphocholine + H2O = a 1-acyl-sn-glycero-3-phosphocholine + a fatty acid + H(+). Snake venom phospholipase A2 (PLA2) that has several activities. It is myotoxic, has weak anticoagulant activity and inhibits neuromuscular transmission by blocking acetylcholine release from the nerve termini. PLA2 catalyzes the calcium-dependent hydrolysis of the 2-acyl groups in 3-sn-phosphoglycerides. The protein is Basic phospholipase A2 of Hydrophis schistosus (Beaked sea snake).